A 175-amino-acid polypeptide reads, in one-letter code: Protein LpfE (175 aa).

The signal sequence occupies residues 1–20; sequence MKNLHALMPACLLLTASAMA.

It belongs to the fimbrial protein family.

Its subcellular location is the fimbrium. This is Protein LpfE (lpfE) from Salmonella typhimurium (strain LT2 / SGSC1412 / ATCC 700720).